Here is a 218-residue protein sequence, read N- to C-terminus: Adenylate kinase (218 aa).

ATP is bound at residue 12–17; it reads GAGKGT. The interval 32–61 is NMP; that stretch reads STGDIFRKNISENTPLGIEAKSYMDNGQLV. Residues Thr33, Arg38, 59-61, 87-90, and Gln94 each bind AMP; these read QLV and GFPR. The tract at residues 128–165 is LID; sequence GRRVCPSCGASYHIKFNPPTNDGKCDLCGSDVIQRKDD. Position 129 (Arg129) interacts with ATP. 2 residues coordinate Zn(2+): Cys132 and Cys135. 138-139 lines the ATP pocket; sequence SY. Positions 152 and 155 each coordinate Zn(2+). Residues Arg162 and Arg173 each contribute to the AMP site. Gln201 serves as a coordination point for ATP.

The protein belongs to the adenylate kinase family. Monomer.

It localises to the cytoplasm. It carries out the reaction AMP + ATP = 2 ADP. Its pathway is purine metabolism; AMP biosynthesis via salvage pathway; AMP from ADP: step 1/1. Functionally, catalyzes the reversible transfer of the terminal phosphate group between ATP and AMP. Plays an important role in cellular energy homeostasis and in adenine nucleotide metabolism. The chain is Adenylate kinase from Clostridium perfringens (strain 13 / Type A).